The chain runs to 136 residues: uncharacterized protein (136 aa).

It localises to the mitochondrion. This is an uncharacterized protein from Arabidopsis thaliana (Mouse-ear cress).